Consider the following 291-residue polypeptide: Ribosomal RNA small subunit methyltransferase H (291 aa).

Residues G36 to H38, D55, L88, D102, and Q109 contribute to the S-adenosyl-L-methionine site. A disordered region spans residues K268–I291.

The protein belongs to the methyltransferase superfamily. RsmH family.

It localises to the cytoplasm. The enzyme catalyses cytidine(1402) in 16S rRNA + S-adenosyl-L-methionine = N(4)-methylcytidine(1402) in 16S rRNA + S-adenosyl-L-homocysteine + H(+). Functionally, specifically methylates the N4 position of cytidine in position 1402 (C1402) of 16S rRNA. The polypeptide is Ribosomal RNA small subunit methyltransferase H (Thermosipho melanesiensis (strain DSM 12029 / CIP 104789 / BI429)).